A 321-amino-acid polypeptide reads, in one-letter code: Tetraketide alpha-pyrone reductase 2 (321 aa).

Serine 2 bears the N-acetylserine mark. NADP(+)-binding positions include 4–28, lysine 40, and tyrosine 160; that span reads YLVTGGTGFIASYIIKSLLELGHTV.

Belongs to the NAD(P)-dependent epimerase/dehydratase family. Dihydroflavonol-4-reductase subfamily.

The protein resides in the cytoplasm. Functionally, may be involved in the biosynthesis of hydroxylated tetraketide compounds that serve as sporopollenin precursors (the main constituents of exine). Acts on tetraketide alpha-pyrones and reduces the carbonyl function on the tetraketide alkyl chain to a secondary alcohol function. This chain is Tetraketide alpha-pyrone reductase 2 (TKPR2), found in Arabidopsis thaliana (Mouse-ear cress).